Here is a 126-residue protein sequence, read N- to C-terminus: Probable DNA-directed RNA polymerase II subunit RPB11 (126 aa).

This sequence belongs to the archaeal Rpo11/eukaryotic RPB11/RPC19 RNA polymerase subunit family. Component of the RNA polymerase II (Pol II) complex consisting of 12 subunits.

It localises to the nucleus. DNA-dependent RNA polymerase catalyzes the transcription of DNA into RNA using the four ribonucleoside triphosphates as substrates. Component of RNA polymerase II which synthesizes mRNA precursors and many functional non-coding RNAs. Pol II is the central component of the basal RNA polymerase II transcription machinery. It is composed of mobile elements that move relative to each other. RPB11 is part of the core element with the central large cleft. The sequence is that of Probable DNA-directed RNA polymerase II subunit RPB11 from Plasmodium falciparum (isolate 3D7).